We begin with the raw amino-acid sequence, 318 residues long: Methionyl-tRNA formyltransferase (318 aa).

(6S)-5,6,7,8-tetrahydrofolate is bound at residue 112 to 115; it reads SILP.

It belongs to the Fmt family.

It catalyses the reaction L-methionyl-tRNA(fMet) + (6R)-10-formyltetrahydrofolate = N-formyl-L-methionyl-tRNA(fMet) + (6S)-5,6,7,8-tetrahydrofolate + H(+). Attaches a formyl group to the free amino group of methionyl-tRNA(fMet). The formyl group appears to play a dual role in the initiator identity of N-formylmethionyl-tRNA by promoting its recognition by IF2 and preventing the misappropriation of this tRNA by the elongation apparatus. The protein is Methionyl-tRNA formyltransferase of Shewanella frigidimarina (strain NCIMB 400).